A 470-amino-acid chain; its full sequence is Nuclear receptor subfamily 0 group B member 1 (470 aa).

Tandem repeats lie at residues 1-67, 68-133, and 134-200. Positions 1 to 253 are 4 X 67 AA tandem repeats; it reads MAGENHQWQG…RPVALKNPQV (253 aa). 3 short sequence motifs (LXXLL motif) span residues 13–17, 80–84, and 146–150; these read LYNML, LYSML, and LYSLL. Residues 201–253 form a 4; truncated repeat; that stretch reads FCGEDHPQQGSTLYCMPTSTNQAQAAPEERPRAPWWDASSGALRPVALKNPQV. The NR LBD domain maps to 215–469; the sequence is CMPTSTNQAQ…DMMLEMLCTK (255 aa). The short motif at 461 to 466 is the AF-2 motif element; that stretch reads MMLEML.

The protein belongs to the nuclear hormone receptor family. NR0 subfamily. Homodimer. Interacts with NR5A1, NR5A2, NR0B2 and with COPS2. Interacts with ESRRB; represses ESRRB activity at the GATA6 promoter.

It is found in the nucleus. The protein localises to the cytoplasm. Its function is as follows. Nuclear receptor that lacks a DNA-binding domain and acts as a corepressor that inhibits the transcriptional activity of other nuclear receptors through heterodimeric interactions. Component of a cascade required for the development of the hypothalamic-pituitary-adrenal-gonadal axis. May also have a role in the development of the embryo and in the maintenance of embryonic stem cell pluripotency. The polypeptide is Nuclear receptor subfamily 0 group B member 1 (NR0B1) (Pongo pygmaeus (Bornean orangutan)).